The chain runs to 246 residues: Thaumatin-like protein 1 (246 aa).

A signal peptide spans 1-24; it reads MMKSQAALLGLTTLAILFFSGAHA. 8 disulfides stabilise this stretch: C33–C245, C81–C91, C96–C103, C151–C234, C156–C217, C164–C180, C184–C193, and C194–C204.

Belongs to the thaumatin family. As to expression, equally expressed in the abscission zone and surrounding tissues of both fruitlets and leaves.

It localises to the secreted. In terms of biological role, may be involved in protecting plant tissues from pathogen infection. In Prunus persica (Peach), this protein is Thaumatin-like protein 1.